Here is a 427-residue protein sequence, read N- to C-terminus: 3-phosphoshikimate 1-carboxyvinyltransferase (427 aa).

3-phosphoshikimate is bound by residues K22, S23, and R27. K22 serves as a coordination point for phosphoenolpyruvate. Positions 97 and 125 each coordinate phosphoenolpyruvate. 7 residues coordinate 3-phosphoshikimate: S171, S172, Q173, S199, D315, N338, and K342. Q173 is a phosphoenolpyruvate binding site. Catalysis depends on D315, which acts as the Proton acceptor. Phosphoenolpyruvate contacts are provided by R346, R388, and K413.

It belongs to the EPSP synthase family. As to quaternary structure, monomer.

Its subcellular location is the cytoplasm. The enzyme catalyses 3-phosphoshikimate + phosphoenolpyruvate = 5-O-(1-carboxyvinyl)-3-phosphoshikimate + phosphate. Its pathway is metabolic intermediate biosynthesis; chorismate biosynthesis; chorismate from D-erythrose 4-phosphate and phosphoenolpyruvate: step 6/7. In terms of biological role, catalyzes the transfer of the enolpyruvyl moiety of phosphoenolpyruvate (PEP) to the 5-hydroxyl of shikimate-3-phosphate (S3P) to produce enolpyruvyl shikimate-3-phosphate and inorganic phosphate. The sequence is that of 3-phosphoshikimate 1-carboxyvinyltransferase from Aliivibrio salmonicida (strain LFI1238) (Vibrio salmonicida (strain LFI1238)).